We begin with the raw amino-acid sequence, 246 residues long: MyoD family inhibitor domain-containing protein (246 aa).

Residues 1 to 71 are disordered; sequence MSGAGEALAP…WGNPSDGELI (71 aa). The span at 33 to 43 shows a compositional bias: basic and acidic residues; sequence KCDKDNTEKDI. Over residues 44-63 the composition is skewed to polar residues; the sequence is TQATNSHFTHGEMQDQSIWG. The region spanning 74–246 is the MDFI domain; it reads QPQRLPQLQT…MECCGICFPS (173 aa). Ser128, Ser140, and Ser143 each carry phosphoserine.

Belongs to the MDFI family. Interacts with HAND1; the interaction sequesters HAND1 into the nucleolus and inhibits its activity. Interacts (via C-terminus) with ZIC2. Interacts (via C-terminus) with AXIN1, the histidine-rich region of CCNT1/cyclin-T and weakly with LEF1. Interacts with CCNT2. Interacts with GATA2. Interacts (via C-terminus) with Piezo channel composed of PIEZO1 or PIEZO2; the interaction prolongs Piezo channel inactivation. As to quaternary structure, (Microbial infection) Interacts (via C-terminus) with HIV-1 Tat and Rev. In terms of processing, palmitoylated. Expressed in lymphatic tissues. Detected in the spleen, thymus, peripheral blood leukocytes as well as prostate, uterus and small intestine. Expressed in lymphatic endothelial cells.

It localises to the nucleus. The protein resides in the nucleolus. Its subcellular location is the cytoplasm. It is found in the secreted. Its function is as follows. Required to control the activity of various transcription factors through their sequestration in the cytoplasm. Retains nuclear Zic proteins ZIC1, ZIC2 and ZIC3 in the cytoplasm and inhibits their transcriptional activation. Modulates the expression from cellular promoters. Binds to the axin complex, resulting in an increase in the level of free beta-catenin. Affects axin regulation of the WNT and JNK signaling pathways. Involved in the development of lymphatic vessel valves. Required to promote lymphatic endothelial cell migration, in a process that involves down-regulation of integrin beta 1 activation and control of cell adhesion to the extracellular matrix. Regulates the activity of mechanosensitive Piezo channel. (Microbial infection) Modulates the expression from viral promoters. Down-regulates Tat-dependent transcription of the human immunodeficiency virus type 1 (HIV-1) LTR by interacting with HIV-1 Tat and Rev and impairing their nuclear import, probably by rendering the NLS domains inaccessible to importin-beta. Also stimulates activation of human T-cell leukemia virus type I (HTLV-I) LTR. The sequence is that of MyoD family inhibitor domain-containing protein from Homo sapiens (Human).